We begin with the raw amino-acid sequence, 448 residues long: Gametocyte surface protein P45/48 (448 aa).

Residues 1 to 27 (MMLYISAKKAQVAFILYIVLVLRIISG) form the signal peptide. A 6-Cys 1 domain is found at 45 to 182 (IGYKCNFSNE…AMVHVRVLKY (138 aa)). Disulfide bonds link cysteine 49–cysteine 71 and cysteine 102–cysteine 156. Residues asparagine 50, asparagine 131, asparagine 190, asparagine 204, asparagine 254, asparagine 299, and asparagine 303 are each glycosylated (N-linked (GlcNAc...) asparagine). The 6-Cys 2 domain occupies 294 to 426 (VIHGCNFSSN…KSAYMTVTID (133 aa)). Cystine bridges form between cysteine 298–cysteine 327, cysteine 344–cysteine 412, and cysteine 352–cysteine 410. Aspartate 426 is lipidated: GPI-anchor amidated aspartate. Positions 427 to 448 (SAYYGFLAKTFIFLIVAILLYI) are cleaved as a propeptide — removed in mature form.

Heterodimer; heterodimerizes with PF230.

The protein resides in the cell surface. The protein localises to the cell membrane. Gametocyte surface protein required for male fertility. This Plasmodium falciparum (isolate 3D7) protein is Gametocyte surface protein P45/48 (PF45/48).